The primary structure comprises 400 residues: MKRTHLFIVGVYVLSSCRAEEGLNFPTYDGKDRVVSLSEKNFKQVLKKYDLLCLYYHEPVSSDKVAQKQFQLKEIVLELVAQVLEHKAIGFVMVDAKKEAKLAKKLGFDEEGSLYILKGDRTIEFDGEFAADVLVEFLLDLIEDPVEIISSKLEVQAFERIEDYIKLIGFFKSGDSEYYKAFEEAAEHFQPYIKFFATFDKGVAKKLSLKMNEVDFYEPFMDEPIAIPNKPYTEEELVEFVKEHQRPTLRRLRPEEMFETWEDDLNGIHIVAFAEKSDPDGYEFLEILKQVARDNTDNPDLSILWIDPDDFPLLVAYWEKTFKIDLFRPQIGVVNVTDADSVWMEIPDDDDLPTAEELEDWIEDVLSGKINTEDDDDEDDDDDNSDEEDNDDSDDDDDDE.

Positions 1–19 (MKRTHLFIVGVYVLSSCRA) are cleaved as a signal peptide. Position 282 is a phosphotyrosine (tyrosine 282). A glycan (N-linked (GlcNAc...) asparagine) is linked at asparagine 335. Residues 365 to 400 (VLSGKINTEDDDDEDDDDDNSDEEDNDDSDDDDDDE) are disordered. Positions 373–400 (EDDDDEDDDDDNSDEEDNDDSDDDDDDE) are enriched in acidic residues.

It belongs to the calsequestrin family. Monomer, homodimer and homooligomer. Mostly monomeric in the absence of calcium. Forms higher oligomers in a calcium-dependent manner. Dimers associate to form tetramers, that then form linear homomer chains. Interacts with ASPH and TRDN. Post-translationally, phosphorylation in the C-terminus, probably by CK2, moderately increases calcium buffering capacity. N-glycosylated.

It localises to the sarcoplasmic reticulum lumen. Its function is as follows. Calsequestrin is a high-capacity, moderate affinity, calcium-binding protein and thus acts as an internal calcium store in muscle. Calcium ions are bound by clusters of acidic residues at the protein surface, especially at the interface between subunits. Can bind around 60 Ca(2+) ions. Regulates the release of lumenal Ca(2+) via the calcium release channel RYR2; this plays an important role in triggering muscle contraction. Plays a role in excitation-contraction coupling in the heart and in regulating the rate of heart beats. In Pongo abelii (Sumatran orangutan), this protein is Calsequestrin-2 (CASQ2).